Reading from the N-terminus, the 377-residue chain is Flagellar P-ring protein (377 aa).

Residues 1–30 form the signal peptide; it reads MLARFLSSLLKASVTALAVVVAFGFAANFA.

The protein belongs to the FlgI family. The basal body constitutes a major portion of the flagellar organelle and consists of four rings (L,P,S, and M) mounted on a central rod.

It localises to the periplasm. Its subcellular location is the bacterial flagellum basal body. In terms of biological role, assembles around the rod to form the L-ring and probably protects the motor/basal body from shearing forces during rotation. In Cupriavidus pinatubonensis (strain JMP 134 / LMG 1197) (Cupriavidus necator (strain JMP 134)), this protein is Flagellar P-ring protein.